A 141-amino-acid polypeptide reads, in one-letter code: Putative antiporter subunit mnhB2 (141 aa).

Helical transmembrane passes span 10–30, 35–55, 70–90, and 114–134; these read TVTK…FFAG, GGGF…FLAF, ILMI…MFFG, and ITLF…TVML.

This sequence belongs to the CPA3 antiporters (TC 2.A.63) subunit B family. As to quaternary structure, may form a heterooligomeric complex that consists of seven subunits: mnhA2, mnhB2, mnhC2, mnhD2, mnhE2, mnhF2 and mnhG2.

The protein resides in the cell membrane. The protein is Putative antiporter subunit mnhB2 (mnhB2) of Staphylococcus aureus (strain Mu3 / ATCC 700698).